Reading from the N-terminus, the 588-residue chain is MSKRTTYCGLVTEAFLGQEITLKGWVNNRRDLGGLIFVDLRDREGIVQVVFNPAFSEEALKIAETVRSEYVVEVQGTVTKRDPETVNPKIKTGQVEVQVTNIKVINKSETPPFSINEENVNVDENIRLKYRYLDLRRQELAQTFKMRHQITRSIRQYLDDEGFFDIETPVLTKSTPEGARDYLVPSRVHDGEFYALPQSPQLFKQLLMISGFDKYYQIVKCFRDEDLRADRQPEFTQVDIEMSFVDQEDVMQMGEEMLKKVVKEVKGVEINGAFPRMTYKEAMRRYGSDKPDTRFEMELIDVSQLGRDMDFKVFKDTVENDGEIKAIVAKGAAEQYTRKDMDALTEFVNIYGAKGLAWVKVVEDGLTGPIGRFFETENVETLLTLTGAEAGDLVMFVADKPNVVAQSLGALRVKLAKELGLIDETKLNFLWVTDWPLLEYDEDAKRYVAAHHPFTSPKEADIAKLGTAPEEAEANAYDIVLNGYELGGGSIRIHDGELQEKMFEVLGFTKEQAQEQFGFLLDAFKYGAPPHGGIALGLDRLVMLLTNRTNLRDTIAFPKTASATCLLTNAPGEVSDKQLEELSLRIRH.

Residue glutamate 177 participates in L-aspartate binding. Residues 201-204 are aspartate; that stretch reads QLFK. Arginine 223 is a binding site for L-aspartate. ATP contacts are provided by residues 223 to 225 and glutamine 232; that span reads RDE. An L-aspartate-binding site is contributed by histidine 451. An ATP-binding site is contributed by glutamate 485. L-aspartate is bound at residue arginine 492. 537 to 540 contributes to the ATP binding site; sequence GLDR.

This sequence belongs to the class-II aminoacyl-tRNA synthetase family. Type 1 subfamily. Homodimer.

The protein localises to the cytoplasm. It carries out the reaction tRNA(Asp) + L-aspartate + ATP = L-aspartyl-tRNA(Asp) + AMP + diphosphate. In terms of biological role, catalyzes the attachment of L-aspartate to tRNA(Asp) in a two-step reaction: L-aspartate is first activated by ATP to form Asp-AMP and then transferred to the acceptor end of tRNA(Asp). The polypeptide is Aspartate--tRNA ligase (Staphylococcus aureus (strain Newman)).